A 229-amino-acid chain; its full sequence is Heptaprenylglyceryl phosphate synthase (229 aa).

Lys12 contributes to the sn-glycerol 1-phosphate binding site. Positions 14 and 40 each coordinate Mg(2+). Sn-glycerol 1-phosphate contacts are provided by residues 159-164 (YLEYSG), Gly189, and 209-210 (GN).

Belongs to the GGGP/HepGP synthase family. Group I subfamily. Homodimer. Requires Mg(2+) as cofactor.

The catalysed reaction is sn-glycerol 1-phosphate + all-trans-heptaprenyl diphosphate = 3-heptaprenyl-sn-glycero-1-phosphate + diphosphate. The protein operates within membrane lipid metabolism; glycerophospholipid metabolism. In terms of biological role, prenyltransferase that catalyzes in vivo the transfer of the heptaprenyl moiety of heptaprenyl pyrophosphate (HepPP; 35 carbon atoms) to the C3 hydroxyl of sn-glycerol-1-phosphate (G1P), producing heptaprenylglyceryl phosphate (HepGP). This reaction is an ether-bond-formation step in the biosynthesis of archaea-type G1P-based membrane lipids found in Bacillales. The sequence is that of Heptaprenylglyceryl phosphate synthase from Bacillus mycoides (strain KBAB4) (Bacillus weihenstephanensis).